A 182-amino-acid chain; its full sequence is ATP-dependent protease subunit HslV (182 aa).

Thr6 is a catalytic residue. Na(+)-binding residues include Ala164, Cys167, and Thr170.

It belongs to the peptidase T1B family. HslV subfamily. As to quaternary structure, a double ring-shaped homohexamer of HslV is capped on each side by a ring-shaped HslU homohexamer. The assembly of the HslU/HslV complex is dependent on binding of ATP.

It is found in the cytoplasm. The enzyme catalyses ATP-dependent cleavage of peptide bonds with broad specificity.. Allosterically activated by HslU binding. Its function is as follows. Protease subunit of a proteasome-like degradation complex believed to be a general protein degrading machinery. The chain is ATP-dependent protease subunit HslV from Borrelia garinii subsp. bavariensis (strain ATCC BAA-2496 / DSM 23469 / PBi) (Borreliella bavariensis).